The following is a 680-amino-acid chain: Galactose oxidase (680 aa).

The N-terminal stretch at 1–24 (MKHFLSLALCFSSINAVAVTVPHK) is a signal peptide. A propeptide spanning residues 25 to 41 (SGGTGSPEGSLQFLSLR) is cleaved from the precursor. Residues 42–189 (ASAPIGSAIS…SIAEINVFQA (148 aa)) enclose the F5/8 type C domain. A disulfide bond links C59 and C68. Kelch repeat units lie at residues 223 to 268 (RVLM…HDMF), 279 to 321 (QIVV…TMSD), 323 to 372 (RVFT…LYRS), 436 to 490 (KILT…VLPD), and 492 to 544 (STFI…LLLP). The 3'-(S-cysteinyl)-tyrosine (Cys-Tyr) cross-link spans 269–313 (CPGISMDGNGQIVVTGGNDAKKTSLYDSSSDSWIPGPDMQVARGY). Y313 serves as a coordination point for Cu cation. Cu cation contacts are provided by Y536 and H537. The active-site Proton acceptor is the Y536. The cysteines at positions 556 and 559 are disulfide-linked. H622 serves as a coordination point for Cu cation.

As to quaternary structure, monomer. Cu(2+) serves as cofactor. In terms of processing, galactose oxidase contains a protein-derived free radical cofactor. In the active state, Tyr-313, which is cross-linked to Cys-269 via a thioether bond, is oxidized to a radical and acts with Cu(2+) as a two-electron acceptor in the oxidation reaction. The cross-link is believed to modulate the redox potential of the tyrosyl radical, which is further stabilized by a stacking interaction with Trp-331 in the active site. The post-translational formation of the cross-link is closely linked to the propeptide cleavage event, and both are copper-dependent, autocatalytic processes. The propeptide may act as an intramolecular chaperone, facilitating thioester bond formation and copper binding by positioning of active-site residues, including copper ligands.

The protein resides in the secreted. The enzyme catalyses D-galactose + O2 = D-galacto-hexodialdose + H2O2. Functionally, catalyzes the sterospecific oxidation of primary alcohols to the corresponding aldehydes. The biologically relevant substrate of the enzyme is not known as the enzyme exhibits broad substrate specificity from small alcohols through sugars to oligo- and polysaccharides. The sequence is that of Galactose oxidase (GAOA) from Gibberella zeae (strain ATCC MYA-4620 / CBS 123657 / FGSC 9075 / NRRL 31084 / PH-1) (Wheat head blight fungus).